The chain runs to 203 residues: uncharacterized protein (203 aa).

Residues histidine 34, glutamate 97, and histidine 172 each contribute to the Fe cation site.

Belongs to the hemerythrin family.

Its subcellular location is the mitochondrion. This is an uncharacterized protein from Schizosaccharomyces pombe (strain 972 / ATCC 24843) (Fission yeast).